The sequence spans 230 residues: Demethylmenaquinone methyltransferase (230 aa).

S-adenosyl-L-methionine is bound by residues Thr-62, Asp-80, Asp-100 to Gly-101, and Ser-117.

Belongs to the class I-like SAM-binding methyltransferase superfamily. MenG/UbiE family.

It catalyses the reaction a 2-demethylmenaquinol + S-adenosyl-L-methionine = a menaquinol + S-adenosyl-L-homocysteine + H(+). It participates in quinol/quinone metabolism; menaquinone biosynthesis; menaquinol from 1,4-dihydroxy-2-naphthoate: step 2/2. Its function is as follows. Methyltransferase required for the conversion of demethylmenaquinol (DMKH2) to menaquinol (MKH2). In Corynebacterium efficiens (strain DSM 44549 / YS-314 / AJ 12310 / JCM 11189 / NBRC 100395), this protein is Demethylmenaquinone methyltransferase.